A 251-amino-acid polypeptide reads, in one-letter code: MQIHLLIVDALNLIRRIHAVQGSPCVKACQHALQQLIQHSQPSHAVAVFDEDDRSDSWRHQCLPDYKAGRSPMPDNLQQEMPLIRQAFNELGVACWHSPGNEADDLAATLVVKVAGAGHQVTIVSTDKGYCQLLAPNIQIRDYFQKRWLDMPFVKQEFGVLPRQLPDYWGLAGISSSKIPGVAGVGAKTATLLLQQADTLEVLYQNLESIPEKWRKKLQQHQQMAFTCKQIATLKTDLLLSGNLQQLRLKK.

Asp104 contacts Mg(2+). One can recognise a 5'-3' exonuclease domain in the interval 160 to 250 (VLPRQLPDYW…SGNLQQLRLK (91 aa)). Residues Leu171, Ala172, Pro180, Val182, and Val185 each contribute to the K(+) site. An interaction with DNA region spans residues 184-189 (GVGAKT).

The protein belongs to the Xni family. Requires Mg(2+) as cofactor. The cofactor is K(+).

Has flap endonuclease activity. During DNA replication, flap endonucleases cleave the 5'-overhanging flap structure that is generated by displacement synthesis when DNA polymerase encounters the 5'-end of a downstream Okazaki fragment. This Yersinia pestis bv. Antiqua (strain Nepal516) protein is Flap endonuclease Xni.